The following is a 2175-amino-acid chain: Non-reducing polyketide synthase PKS1 (2175 aa).

The N-terminal acylcarrier protein transacylase domain (SAT) stretch occupies residues 5–242 (LLFGDQTAEQ…VSIPIYGPYH (238 aa)). Positions 369-801 (TDKIAIVGMA…GGNTALLIED (433 aa)) constitute a Ketosynthase family 3 (KS3) domain. Catalysis depends on for beta-ketoacyl synthase activity residues Cys-541, His-676, and His-719. Residues 900 to 1212 (FCFTGQGSQY…ISTSICHLFT (313 aa)) form a malonyl-CoA:ACP transacylase (MAT) domain region. Ser-988 acts as the For acyl/malonyl transferase activity in catalysis. Positions 1285 to 1604 (STSCQNVISE…RKVLNVFLPP (320 aa)) are product template (PT) domain. Residues 1289 to 1424 (QNVISEEFDG…CTIRYEDKAV (136 aa)) are N-terminal hotdog fold. Residues 1289 to 1599 (QNVISEEFDG…FQQIPRKVLN (311 aa)) form the PKS/mFAS DH domain. His-1321 serves as the catalytic Proton acceptor; for dehydratase activity. A C-terminal hotdog fold region spans residues 1452-1599 (AHKVQRGMAY…FQQIPRKVLN (148 aa)). Catalysis depends on Asp-1512, which acts as the Proton donor; for dehydratase activity. The disordered stretch occupies residues 1640–1664 (PVRKSAGPAKAAAAPSMPKPSKVAA). The segment covering 1643-1664 (KSAGPAKAAAAPSMPKPSKVAA) has biased composition (low complexity). The 78-residue stretch at 1666 to 1743 (KPAGSMVDKV…EMKKYFSQFN (78 aa)) folds into the Carrier 1 domain. Ser-1703 carries the post-translational modification O-(pantetheine 4'-phosphoryl)serine. A disordered region spans residues 1766–1804 (ATPFDEMSTPASSAPSVPQSDAGKPSPDSPTGDSLSDDV). Residues 1774–1784 (TPASSAPSVPQ) show a composition bias toward polar residues. One can recognise a Carrier 2 domain in the interval 1801 to 1878 (SDDVGDVSIA…DIENALGMRP (78 aa)). Ser-1838 is subject to O-(pantetheine 4'-phosphoryl)serine. The tract at residues 1879–1899 (KPKAVGPKLSKPSTKTDMNEV) is disordered. The segment covering 1889–1899 (KPSTKTDMNEV) has biased composition (polar residues). A claisen cyclase domain region spans residues 1932 to 2158 (KVFFLPDGSG…GHHFSMMKDP (227 aa)). The active-site For Claisen cyclase activity is the Ser-2002.

Pantetheine 4'-phosphate is required as a cofactor.

It carries out the reaction 6 malonyl-CoA + acetyl-CoA + 6 H(+) = naphtopyrone YWA1 + 6 CO2 + 7 CoA + H2O. The protein operates within pigment biosynthesis; melanin biosynthesis. In terms of biological role, non-reducing polyketide synthase; part of the gene cluster 29 that mediates the biosynthesis of mediates the biosynthesis of dihydroxynaphthalene (DHN)-melanin, a bluish-green pigment and a structural component of the conidial wall. The first step of the pathway is the production of the heptaketide naphtopyrone YWA1 by the polyketide synthase PKS1 though condensation of acetyl-CoA with malonyl-CoA. This Zymoseptoria tritici (strain CBS 115943 / IPO323) (Speckled leaf blotch fungus) protein is Non-reducing polyketide synthase PKS1.